The primary structure comprises 125 residues: Ribosome-binding factor A (125 aa).

The protein belongs to the RbfA family. In terms of assembly, monomer. Binds 30S ribosomal subunits, but not 50S ribosomal subunits or 70S ribosomes.

The protein resides in the cytoplasm. Functionally, one of several proteins that assist in the late maturation steps of the functional core of the 30S ribosomal subunit. Associates with free 30S ribosomal subunits (but not with 30S subunits that are part of 70S ribosomes or polysomes). Required for efficient processing of 16S rRNA. May interact with the 5'-terminal helix region of 16S rRNA. This is Ribosome-binding factor A from Xylella fastidiosa (strain M12).